Consider the following 25-residue polypeptide: Bacteriocin mutacin F-59.1 (25 aa).

A disulfide bridge connects residues cysteine 9 and residue 14.

It localises to the secreted. In terms of biological role, bactericidal activity against a wide range of pathogenic bacteria, including Bacillus spp., Enterococcus spp., Listeria spp., Staphylococcus spp. and Streptococcus spp. Has no activity against Lactobacillus salivarius, Staphylococcus aureus, Streptococcus pyogenes and Streptococcus suis. In Streptococcus mutans, this protein is Bacteriocin mutacin F-59.1.